Consider the following 481-residue polypeptide: UDP-glycosyltransferase 85C2 (481 aa).

Histidine 23 (proton acceptor) is an active-site residue. Residue histidine 23 coordinates an anthocyanidin. The active-site Charge relay is aspartate 120. Residues threonine 143, glutamine 362, histidine 377, tryptophan 380, serine 382, glutamate 385, aspartate 401, and glutamine 402 each contribute to the UDP-alpha-D-glucose site.

It belongs to the UDP-glycosyltransferase family.

The enzyme catalyses steviol + UDP-alpha-D-glucose = steviolmonoside + UDP + H(+). It catalyses the reaction steviolmonoside + UDP-alpha-D-glucose = rubusoside + UDP. Involved in the biosynthesis of steviol glycosides in leaves. Converts steviol to the mono-glycoside steviolmonoside. Converts the mono-glycoside steviolmonoside to the bi-glycoside rubusoside. This Stevia rebaudiana (Stevia) protein is UDP-glycosyltransferase 85C2.